Here is a 524-residue protein sequence, read N- to C-terminus: Probable cytochrome P450 12c1, mitochondrial (524 aa).

Cys470 serves as a coordination point for heme.

It belongs to the cytochrome P450 family. Requires heme as cofactor.

Its subcellular location is the mitochondrion membrane. The chain is Probable cytochrome P450 12c1, mitochondrial (Cyp12c1) from Drosophila melanogaster (Fruit fly).